Reading from the N-terminus, the 121-residue chain is Small ribosomal subunit protein uS13 (121 aa).

Residues 92–121 (HRMGLPCRGQKTKTNARTRKGPRRGAARRK) are disordered. Basic residues predominate over residues 101-121 (QKTKTNARTRKGPRRGAARRK).

This sequence belongs to the universal ribosomal protein uS13 family. In terms of assembly, part of the 30S ribosomal subunit. Forms a loose heterodimer with protein S19. Forms two bridges to the 50S subunit in the 70S ribosome.

Its function is as follows. Located at the top of the head of the 30S subunit, it contacts several helices of the 16S rRNA. In the 70S ribosome it contacts the 23S rRNA (bridge B1a) and protein L5 of the 50S subunit (bridge B1b), connecting the 2 subunits; these bridges are implicated in subunit movement. Contacts the tRNAs in the A and P-sites. The polypeptide is Small ribosomal subunit protein uS13 (Desulfotalea psychrophila (strain LSv54 / DSM 12343)).